The sequence spans 245 residues: 1-(5-phosphoribosyl)-5-[(5-phosphoribosylamino)methylideneamino] imidazole-4-carboxamide isomerase (245 aa).

The active-site Proton acceptor is the Asp-8. The active-site Proton donor is the Asp-130.

Belongs to the HisA/HisF family.

Its subcellular location is the cytoplasm. The catalysed reaction is 1-(5-phospho-beta-D-ribosyl)-5-[(5-phospho-beta-D-ribosylamino)methylideneamino]imidazole-4-carboxamide = 5-[(5-phospho-1-deoxy-D-ribulos-1-ylimino)methylamino]-1-(5-phospho-beta-D-ribosyl)imidazole-4-carboxamide. The protein operates within amino-acid biosynthesis; L-histidine biosynthesis; L-histidine from 5-phospho-alpha-D-ribose 1-diphosphate: step 4/9. This chain is 1-(5-phosphoribosyl)-5-[(5-phosphoribosylamino)methylideneamino] imidazole-4-carboxamide isomerase, found in Pseudomonas aeruginosa (strain LESB58).